Here is a 532-residue protein sequence, read N- to C-terminus: Intercellular adhesion molecule 1 (532 aa).

An N-terminal signal peptide occupies residues 1–27; that stretch reads MAPSSPRPALPALLVLLGALFPGPGNA. Over 28-480 the chain is Extracellular; that stretch reads QTSVSPPKVI…TVNVLSPRYE (453 aa). Ig-like C2-type domains lie at 41-103 and 128-193; these read GGSV…QSTA and GKDL…LDLR. 3 disulfide bridges follow: Cys-48–Cys-92, Cys-52–Cys-96, and Cys-135–Cys-186. Residue Asn-145 is glycosylated (N-linked (GlcNAc...) asparagine). Positions 152–154 match the Cell attachment site; atypical motif; the sequence is RGE. Asn-183, Asn-202, Asn-267, and Asn-296 each carry an N-linked (GlcNAc...) asparagine glycan. Ig-like C2-type domains lie at 230-297 and 325-378; these read DTQG…LGNQ and GTEV…LEVA. Residues Cys-237 and Cys-290 are joined by a disulfide bond. Residues Cys-332 and Cys-371 are joined by a disulfide bond. N-linked (GlcNAc...) asparagine glycosylation is found at Asn-385 and Asn-406. Cystine bridges form between Cys-403–Cys-419, Cys-419–Cys-457, and Cys-431–Cys-457. The Ig-like C2-type 5 domain occupies 412 to 464; that stretch reads NSQQTPMCQASGNPLPELKCLKDGTFPLPVGESVTVTRDLEGTYLCRARSTQG. The chain crosses the membrane as a helical span at residues 481–503; it reads IVIITVVAAAVIMGTAGLSTYLY. Residues 504–532 are Cytoplasmic-facing; it reads NRQRKIRKYRLQQAQKGTPMKPNTQATPP. 2 positions are modified to phosphothreonine: Thr-521 and Thr-530.

The protein belongs to the immunoglobulin superfamily. ICAM family. In terms of assembly, homodimer. Interacts with MUC1 and promotes cell aggregation in epithelial cells. Interacts with ARHGEF26/SGEF. Interacts (on T cell side) with CD81, CD247 and CD9 at immunological synapses between antigen-presenting cells and T cells. Monoubiquitinated, which is promoted by MARCH9 and leads to endocytosis.

The protein localises to the membrane. Its function is as follows. ICAM proteins are ligands for the leukocyte adhesion protein LFA-1 (integrin alpha-L/beta-2). During leukocyte trans-endothelial migration, ICAM1 engagement promotes the assembly of endothelial apical cups through ARHGEF26/SGEF and RHOG activation. The chain is Intercellular adhesion molecule 1 (ICAM1) from Pan paniscus (Pygmy chimpanzee).